The sequence spans 1102 residues: Protein MMS22-like (1102 aa).

This sequence belongs to the MMS22 family. MMS22L subfamily.

It is found in the nucleus. The protein localises to the chromosome. In terms of biological role, involved in recombination-dependent repair of stalled or collapsed replication forks. The protein is Protein MMS22-like of Drosophila melanogaster (Fruit fly).